Reading from the N-terminus, the 347-residue chain is MLKFIQNNREATALLAIVCLFVFPGALDSQYLSVQTLTMVFSSAQILMLLAIGATMVMLTRNIDVSVGSTTGMCAVLLGVMLNAGYSLPVACLATLILGIVAGFFNGVLVAWLKIPAIVATLGTLGLYRGIMLLWTGGKWIEGLPAGLKQLSAPVFLGISAIGWFTLVLALLMAWLLAKTAFGRNFYATGDNLQGARQLGVRTEMVRIMAFSLNGGMAALAGIVFTSQIGFIPNQTGTGLEMKAIAACVLGGISLLGGSGTVIGAILGAYFLTQIDSVLVLLRIPAWWNDFIAGLVLLGVLVFDGRLRCALQRNLRRQKYARFISPPTPLQAEAKTHAQQNKNKEVA.

A run of 9 helical transmembrane segments spans residues 14–34 (LLAI…YLSV), 39–59 (MVFS…MVML), 72–92 (GMCA…PVAC), 93–113 (LATL…VAWL), 115–135 (IPAI…MLLW), 155–175 (VFLG…LMAW), 213–233 (LNGG…GFIP), 249–269 (VLGG…ILGA), and 284–304 (IPAW…LVFD).

Belongs to the binding-protein-dependent transport system permease family. AraH/RbsC subfamily. As to quaternary structure, the complex is composed of two ATP-binding proteins (LsrA), two transmembrane proteins (LsrC and LsrD) and a solute-binding protein (LsrB).

It is found in the cell inner membrane. Part of the ABC transporter complex LsrABCD involved in autoinducer 2 (AI-2) import. Probably responsible for the translocation of the substrate across the membrane. The chain is Autoinducer 2 import system permease protein LsrC (lsrC) from Salmonella choleraesuis (strain SC-B67).